The chain runs to 168 residues: Small ribosomal subunit protein uS5 (168 aa).

In terms of domain architecture, S5 DRBM spans 17 to 80 (IEDQLVAVNR…EDGKKKMINV (64 aa)).

This sequence belongs to the universal ribosomal protein uS5 family. As to quaternary structure, part of the 30S ribosomal subunit. Contacts proteins S4 and S8.

In terms of biological role, with S4 and S12 plays an important role in translational accuracy. Functionally, located at the back of the 30S subunit body where it stabilizes the conformation of the head with respect to the body. This chain is Small ribosomal subunit protein uS5, found in Lactobacillus acidophilus (strain ATCC 700396 / NCK56 / N2 / NCFM).